The following is a 157-amino-acid chain: SsrA-binding protein (157 aa).

Belongs to the SmpB family.

It localises to the cytoplasm. Its function is as follows. Required for rescue of stalled ribosomes mediated by trans-translation. Binds to transfer-messenger RNA (tmRNA), required for stable association of tmRNA with ribosomes. tmRNA and SmpB together mimic tRNA shape, replacing the anticodon stem-loop with SmpB. tmRNA is encoded by the ssrA gene; the 2 termini fold to resemble tRNA(Ala) and it encodes a 'tag peptide', a short internal open reading frame. During trans-translation Ala-aminoacylated tmRNA acts like a tRNA, entering the A-site of stalled ribosomes, displacing the stalled mRNA. The ribosome then switches to translate the ORF on the tmRNA; the nascent peptide is terminated with the 'tag peptide' encoded by the tmRNA and targeted for degradation. The ribosome is freed to recommence translation, which seems to be the essential function of trans-translation. The polypeptide is SsrA-binding protein (Chlorobaculum tepidum (strain ATCC 49652 / DSM 12025 / NBRC 103806 / TLS) (Chlorobium tepidum)).